The following is a 374-amino-acid chain: Carbamoyl phosphate synthase small chain (374 aa).

The tract at residues 1-186 is CPSase; the sequence is MTEPAILVLE…DRNEWKRAAP (186 aa). S47, G237, and G239 together coordinate L-glutamine. Positions 189–374 constitute a Glutamine amidotransferase type-1 domain; it reads KVVAYDYGVK…RFITMMAAQS (186 aa). Residue C265 is the Nucleophile of the active site. L-glutamine is bound by residues L266, Q269, N307, G309, and F310. Catalysis depends on residues H349 and E351.

It belongs to the CarA family. As to quaternary structure, composed of two chains; the small (or glutamine) chain promotes the hydrolysis of glutamine to ammonia, which is used by the large (or ammonia) chain to synthesize carbamoyl phosphate. Tetramer of heterodimers (alpha,beta)4.

It catalyses the reaction hydrogencarbonate + L-glutamine + 2 ATP + H2O = carbamoyl phosphate + L-glutamate + 2 ADP + phosphate + 2 H(+). It carries out the reaction L-glutamine + H2O = L-glutamate + NH4(+). It functions in the pathway amino-acid biosynthesis; L-arginine biosynthesis; carbamoyl phosphate from bicarbonate: step 1/1. It participates in pyrimidine metabolism; UMP biosynthesis via de novo pathway; (S)-dihydroorotate from bicarbonate: step 1/3. Small subunit of the glutamine-dependent carbamoyl phosphate synthetase (CPSase). CPSase catalyzes the formation of carbamoyl phosphate from the ammonia moiety of glutamine, carbonate, and phosphate donated by ATP, constituting the first step of 2 biosynthetic pathways, one leading to arginine and/or urea and the other to pyrimidine nucleotides. The small subunit (glutamine amidotransferase) binds and cleaves glutamine to supply the large subunit with the substrate ammonia. The sequence is that of Carbamoyl phosphate synthase small chain from Xylella fastidiosa (strain 9a5c).